We begin with the raw amino-acid sequence, 156 residues long: Protein CROC-4 (156 aa).

The tract at residues 46 to 71 (RATSSTTDSSRAPSSPRPPGSTSHCG) is disordered. Over residues 48–59 (TSSTTDSSRAPS) the composition is skewed to low complexity.

Expressed throughout the brain in the thalamus, subthalamic nucleus, corpus callosum, hippocampus, substantia nigra, caudate nucleus, and amygdala.

It localises to the nucleus. Functionally, may play a role in FOS signaling pathways involved in development and remodeling of neurons. Promotes transcription of the FOS promoter. This chain is Protein CROC-4, found in Homo sapiens (Human).